Here is a 581-residue protein sequence, read N- to C-terminus: MKSHIQSLLEQTLESFKQQGIVPADFEARIQVDRTKDKSHGDLATNLAMMLTKVAGKNPRELAQLIIDTLPASAYVAKVEIAGPGFINFFINDSALADQLQNAVNDEHLGIKLPTPQTVVVDYSSPNLAKEMHVGHLRSTIIGDSVVRALEFLGHKVIRQNHVGDWGTQFGMLLAYMEELRAKNGEKAQLELSDLENFYRAAKLRFDESAEFATRARQLVVELQSGDEYCNKLWREFNDISLSHCHEVYARLGVSLTRADVHGESAYNADLEQVVKDLDAQGLLTESNGAKVVFQEAFRNKEGEPLPVIIQKADGGYLYATSDLAAMRYRSNVLKADRVLYFVDLRQALHFQQVFSLAKLAKFVREDMSLEHLGFGTMNGEDGRPFKTRSGGVVKLVDLLEEANVRALELVRSKNPDMDEVTLTEIARVVGISAVKYADLSKNRTSDYIFSFEQMLSFEGNTAPYLLYAYTRVAGIFKRVTDLDLSQAKIVLEHEKEKDLGNKLAQFGEILSRVVDKGQPHVLCAYLYELAGAFSSFYEACPVLAADNDAQKNSRLLLAQLTARTLQKGLNLLGIETLERM.

The 'HIGH' region motif lies at 126-136 (PNLAKEMHVGH).

It belongs to the class-I aminoacyl-tRNA synthetase family. As to quaternary structure, monomer.

The protein localises to the cytoplasm. The enzyme catalyses tRNA(Arg) + L-arginine + ATP = L-arginyl-tRNA(Arg) + AMP + diphosphate. The protein is Arginine--tRNA ligase of Shewanella baltica (strain OS223).